Here is a 353-residue protein sequence, read N- to C-terminus: rRNA methyltransferase 1, mitochondrial (353 aa).

Residues 1-20 (MALLSTVRGATWGRLVTRHF) constitute a mitochondrion transit peptide. Residues 311–353 (PTEGERRQLLQDPQEPSARSEGLSMAQHPGLSSGPEKERQNEG) form a disordered region.

This sequence belongs to the class IV-like SAM-binding methyltransferase superfamily. RNA methyltransferase TrmH family.

It localises to the mitochondrion matrix. It carries out the reaction guanosine(1145) in 16S rRNA + S-adenosyl-L-methionine = 2'-O-methylguanosine(1145) in 16S rRNA + S-adenosyl-L-homocysteine + H(+). S-adenosyl-L-methionine-dependent 2'-O-ribose methyltransferase that catalyzes the formation of 2'-O-methylguanosine at position 1145 (Gm1145) in the 16S mitochondrial large subunit ribosomal RNA (mtLSU rRNA), a universally conserved modification in the peptidyl transferase domain of the mtLSU rRNA. This chain is rRNA methyltransferase 1, mitochondrial, found in Homo sapiens (Human).